An 87-amino-acid chain; its full sequence is Small ribosomal subunit protein uS17 (87 aa).

It belongs to the universal ribosomal protein uS17 family. As to quaternary structure, part of the 30S ribosomal subunit.

Functionally, one of the primary rRNA binding proteins, it binds specifically to the 5'-end of 16S ribosomal RNA. This Staphylococcus aureus (strain JH1) protein is Small ribosomal subunit protein uS17.